A 506-amino-acid polypeptide reads, in one-letter code: UPF0371 protein FN1121 (506 aa).

It belongs to the UPF0371 family.

In Fusobacterium nucleatum subsp. nucleatum (strain ATCC 25586 / DSM 15643 / BCRC 10681 / CIP 101130 / JCM 8532 / KCTC 2640 / LMG 13131 / VPI 4355), this protein is UPF0371 protein FN1121.